Reading from the N-terminus, the 209-residue chain is B3 domain-containing protein At2g31420 (209 aa).

The TF-B3 DNA-binding region spans 101–198; that stretch reads LSKLEKSDFL…KLCFALSSPT (98 aa).

Its subcellular location is the nucleus. This chain is B3 domain-containing protein At2g31420, found in Arabidopsis thaliana (Mouse-ear cress).